Here is an 81-residue protein sequence, read N- to C-terminus: MTDQHLEDLIVHIVTPLVDHPDDIRVIREETDQKIALRLSVHKSDTGKVIGKQGRTAKAIRTAVFAAGVQSSKKVQFEIFD.

Residues 34-81 (KIALRLSVHKSDTGKVIGKQGRTAKAIRTAVFAAGVQSSKKVQFEIFD) enclose the KH domain.

Belongs to the KhpA RNA-binding protein family. In terms of assembly, forms a complex with KhpB.

It localises to the cytoplasm. Its function is as follows. A probable RNA chaperone. Forms a complex with KhpB which binds to cellular RNA and controls its expression. Plays a role in peptidoglycan (PG) homeostasis and cell length regulation. The polypeptide is RNA-binding protein KhpA (Bacillus subtilis (strain 168)).